The following is a 206-amino-acid chain: Small ribosomal subunit protein uS4 (206 aa).

Residues 96-156 (GRLDNVVYRM…EKSKKQSRIK (61 aa)) enclose the S4 RNA-binding domain.

This sequence belongs to the universal ribosomal protein uS4 family. In terms of assembly, part of the 30S ribosomal subunit. Contacts protein S5. The interaction surface between S4 and S5 is involved in control of translational fidelity.

In terms of biological role, one of the primary rRNA binding proteins, it binds directly to 16S rRNA where it nucleates assembly of the body of the 30S subunit. Its function is as follows. With S5 and S12 plays an important role in translational accuracy. This chain is Small ribosomal subunit protein uS4, found in Photorhabdus laumondii subsp. laumondii (strain DSM 15139 / CIP 105565 / TT01) (Photorhabdus luminescens subsp. laumondii).